We begin with the raw amino-acid sequence, 219 residues long: LexA repressor (219 aa).

The segment at residues 28–48 (RAEIAAELGFRSANAAEEHLQ) is a DNA-binding region (H-T-H motif). Active-site for autocatalytic cleavage activity residues include Ser-138 and Lys-175.

The protein belongs to the peptidase S24 family. Homodimer.

The enzyme catalyses Hydrolysis of Ala-|-Gly bond in repressor LexA.. Functionally, represses a number of genes involved in the response to DNA damage (SOS response), including recA and lexA. In the presence of single-stranded DNA, RecA interacts with LexA causing an autocatalytic cleavage which disrupts the DNA-binding part of LexA, leading to derepression of the SOS regulon and eventually DNA repair. The polypeptide is LexA repressor (Herminiimonas arsenicoxydans).